Consider the following 957-residue polypeptide: Glycine dehydrogenase (decarboxylating) (957 aa).

The residue at position 708 (K708) is an N6-(pyridoxal phosphate)lysine.

This sequence belongs to the GcvP family. In terms of assembly, the glycine cleavage system is composed of four proteins: P, T, L and H. Pyridoxal 5'-phosphate serves as cofactor.

It catalyses the reaction N(6)-[(R)-lipoyl]-L-lysyl-[glycine-cleavage complex H protein] + glycine + H(+) = N(6)-[(R)-S(8)-aminomethyldihydrolipoyl]-L-lysyl-[glycine-cleavage complex H protein] + CO2. In terms of biological role, the glycine cleavage system catalyzes the degradation of glycine. The P protein binds the alpha-amino group of glycine through its pyridoxal phosphate cofactor; CO(2) is released and the remaining methylamine moiety is then transferred to the lipoamide cofactor of the H protein. This is Glycine dehydrogenase (decarboxylating) from Salmonella paratyphi B (strain ATCC BAA-1250 / SPB7).